A 396-amino-acid chain; its full sequence is ATP-dependent RNA helicase eIF4A (396 aa).

Residues 22-50 (HKFDELKLKEVLLRGIYGYGFVDPSAIQQ) carry the Q motif motif. Residues 53–223 (ILPIIEGHDV…DKFMNKPVRI (171 aa)) form the Helicase ATP-binding domain. 66–73 (AQSGTGKT) contacts ATP. A DEAD box motif is present at residues 171–174 (DEAD). One can recognise a Helicase C-terminal domain in the interval 234-395 (GIQQYYINVE…ELPANIADLF (162 aa)).

This sequence belongs to the DEAD box helicase family. eIF4A subfamily. In terms of assembly, component of the eIF4F complex, which composition varies with external and internal environmental conditions. It is composed of at least eIF4A, eIF4E and eIF4G.

It localises to the cytoplasm. The enzyme catalyses ATP + H2O = ADP + phosphate + H(+). ATP-dependent RNA helicase which is a subunit of the eIF4F complex involved in cap recognition and is required for mRNA binding to ribosome. In the current model of translation initiation, eIF4A unwinds RNA secondary structures in the 5'-UTR of mRNAs which is necessary to allow efficient binding of the small ribosomal subunit, and subsequent scanning for the initiator codon. The sequence is that of ATP-dependent RNA helicase eIF4A (TIF1) from Eremothecium gossypii (strain ATCC 10895 / CBS 109.51 / FGSC 9923 / NRRL Y-1056) (Yeast).